We begin with the raw amino-acid sequence, 55 residues long: ATP synthase protein 8 (55 aa).

Residues 11 to 31 (LIMFSVTLMLLIVLVINHFML) form a helical membrane-spanning segment.

The protein belongs to the ATPase protein 8 family. F-type ATPases have 2 components, CF(1) - the catalytic core - and CF(0) - the membrane proton channel.

It localises to the mitochondrion membrane. Mitochondrial membrane ATP synthase (F(1)F(0) ATP synthase or Complex V) produces ATP from ADP in the presence of a proton gradient across the membrane which is generated by electron transport complexes of the respiratory chain. F-type ATPases consist of two structural domains, F(1) - containing the extramembraneous catalytic core and F(0) - containing the membrane proton channel, linked together by a central stalk and a peripheral stalk. During catalysis, ATP synthesis in the catalytic domain of F(1) is coupled via a rotary mechanism of the central stalk subunits to proton translocation. Part of the complex F(0) domain. Minor subunit located with subunit a in the membrane. In Albinaria caerulea (Land snail), this protein is ATP synthase protein 8 (MT-ATP8).